An 86-amino-acid chain; its full sequence is UPF0335 protein BruAb1_1737 (86 aa).

Belongs to the UPF0335 family.

The sequence is that of UPF0335 protein BruAb1_1737 from Brucella abortus biovar 1 (strain 9-941).